The following is a 150-amino-acid chain: Large ribosomal subunit protein bL9 (150 aa).

The protein belongs to the bacterial ribosomal protein bL9 family.

Binds to the 23S rRNA. In Pseudoalteromonas translucida (strain TAC 125), this protein is Large ribosomal subunit protein bL9.